The chain runs to 236 residues: Sperm flagellar protein 1 (236 aa).

The Calponin-homology (CH) domain occupies 7-112; the sequence is EEALHQLYLW…VLIPLRQRLE (106 aa). The disordered stretch occupies residues 118-177; that stretch reads RKQGIGSLQELAPQDGTDYMDVGLSQKARGEGVPDPQGRGQLREGRLPVPRPPGDSQALQ. Residues 183–236 form an essential for homodimerization and microtubule bundling activity region; that stretch reads ILQIAEKEQELLASQETVQVLQMKVRRLEHLLQLKNVRIEDLSRRLQQAERKQR.

As to quaternary structure, homodimer. Interacts with actin, TJP1, CGN and CDH1.

The protein localises to the cytoplasm. Its subcellular location is the cell projection. It localises to the cilium. It is found in the flagellum. The protein resides in the cytoskeleton. The protein localises to the cilium axoneme. Its subcellular location is the apical cell membrane. It localises to the basolateral cell membrane. It is found in the stress fiber. The protein resides in the microvillus. The protein localises to the lamellipodium. Its subcellular location is the filopodium. Microtubule-associated protein involved in the stabilization of microtubules along the axis of migration during radial intercalation. Promotes the establishment and stabilization of an axis of microtubules required for the active migration of cells into the outer epithelium. Microtubule-associated protein that promotes microtubule bundling and stabilizes microtubules against depolymerization in response to cold shock. Essential for ciliary central apparatus formation which requires both its microtubule-binding and bundling activities and for ciliary localization of HYDIN and SPAG6 in ependymal cilia. Binds actin in intestinal epithelial cells (IECs), essential for IECs survival and contributes to formation of filopodia and lamellipodia in migrating IECs. Regulates planar cell polarity signaling pathway and asymmetric microtubule accumulation in ciliated epithelia. The protein is Sperm flagellar protein 1 (SPEF1) of Bos taurus (Bovine).